The chain runs to 174 residues: Peptidyl-prolyl cis-trans isomerase D, mitochondrial (174 aa).

The region spanning 10 to 173 is the PPIase cyclophilin-type domain; sequence FFQIKQGNTP…AACVIEDCGQ (164 aa).

The protein belongs to the cyclophilin-type PPIase family. PPIase D subfamily.

The protein localises to the mitochondrion. The enzyme catalyses [protein]-peptidylproline (omega=180) = [protein]-peptidylproline (omega=0). Its activity is regulated as follows. Binds cyclosporin A (CsA). CsA mediates some of its effects via an inhibitory action on PPIase. Functionally, PPIases accelerate the folding of proteins. It catalyzes the cis-trans isomerization of proline imidic peptide bonds in oligopeptides. The chain is Peptidyl-prolyl cis-trans isomerase D, mitochondrial (cypD) from Dictyostelium discoideum (Social amoeba).